The following is an 800-amino-acid chain: MAEVAAGVGRFKSNYAVERKIEPFYKGGKVQLDQTGQHLFCVCGTRVNILDVASGAVLRSLEQEDQEDITAFDLSPDDKVLVTASRALLLAQWAWQEGSVTRLWKAIHTAPVATMAFDPTSTLLATGGCDGAVRVWDVVRCYGTHHFRGSPGVVHLVAFHPDPARLLLFSSAADTSIRVWSLQERSCLAVLTAHYSAVTSLTFSADGHTMLSSGRDKICVIWDLRSLQATRTVPVFESVEAAVLLPEEPAPELGVKSAGLHFLTAGDQGALRVWEAASGRCVHAQQRLRGPGRELTHCTLAHAAGLLLSVTADHNLLLYDARSLRLRKQFAGYSEEVLDVRFLGPEDSHVVVASNSPCLKVFDLQTSACQILHGHTDIVLALDVFRKGRLFASCAKDQSIRVWRMNKSGEVACVAQGSGHTHSVGTICCSRLKETFLVTGSQDCTVKLWPLPEALLSKGTGHEGGPVFLQAQATQHCHDKDINSVAVAPNDKLLATGSQDRTAKLWALPRCQLLGTFSGHRRGLWCVQFSPMDQVLATASADGTIKLWALQDFSCLKTFEGHDASVLKVAFVSRGTQLLSSGSDGLLKLWTIKNNECVRTLDAHEDKVWGLHCSRLDDRALTGASDSRVVLWKDVTEAEQAEEQAKREEQVVKQQELDNLLHEKRYLRALGLAISLDRPHTVLTVIQAIRRDPESCEKLETTVLQLRRDQKEALLRFCVTWNTNSRHCHEAQAVLGVLLRHEAPDELLTYDGVRASLEGLLPYTERHFQRLSRMLQAATFLDFLWHNMKLPALPTAPAAL.

At A2 the chain carries N-acetylalanine. WD repeat units lie at residues 64-105 (EDQE…RLWK), 107-146 (IHTA…GTHH), 149-190 (GSPG…CLAV), 193-232 (AHYS…ATRT), 245-284 (LPEE…CVHA), 290-329 (GPGR…LRKQ), 332-372 (GYSE…CQIL), 374-413 (GHTD…EVAC), 419-459 (GHTH…LSKG), 477-516 (CHDK…LLGT), 519-560 (GHRR…KTFE), 562-602 (HDAS…RTLD), and 604-642 (HEDK…EQAE). S257 carries the post-translational modification Phosphoserine. K407 participates in a covalent cross-link: Glycyl lysine isopeptide (Lys-Gly) (interchain with G-Cter in SUMO2).

Part of the small subunit (SSU) processome, composed of more than 70 proteins and the RNA chaperone small nucleolar RNA (snoRNA) U3.

Its subcellular location is the nucleus. The protein resides in the nucleolus. Functionally, part of the small subunit (SSU) processome, first precursor of the small eukaryotic ribosomal subunit. During the assembly of the SSU processome in the nucleolus, many ribosome biogenesis factors, an RNA chaperone and ribosomal proteins associate with the nascent pre-rRNA and work in concert to generate RNA folding, modifications, rearrangements and cleavage as well as targeted degradation of pre-ribosomal RNA by the RNA exosome. In Bos taurus (Bovine), this protein is Transducin beta-like protein 3 (TBL3).